Consider the following 221-residue polypeptide: Serine/arginine-rich splicing factor 2 (221 aa).

N-acetylserine is present on Ser-2. Residue Ser-2 is modified to Phosphoserine. The 79-residue stretch at 14-92 (TSLKVDNLTY…RELRVQMARY (79 aa)) folds into the RRM domain. 2 positions are modified to phosphothreonine: Thr-22 and Thr-25. Residue Ser-26 is modified to Phosphoserine. Lys-52 carries the post-translational modification N6-acetyllysine. The disordered stretch occupies residues 92-221 (YGRPPDSHHS…SPEEEGAVSS (130 aa)). 2 stretches are compositionally biased toward basic residues: residues 117–171 (RRSR…RSKS) and 179–189 (SRSRSRSRSRS). A phosphoserine mark is found at Ser-189, Ser-191, Ser-204, Ser-206, Ser-208, Ser-212, and Ser-220.

This sequence belongs to the splicing factor SR family. Interacts with CCNL1 and CCNL2. Interacts with SCAF11. Interacts with ZRSR2/U2AF1-RS2. Interacts with CCDC55 (via C-terminus). In vitro, self-associates and binds SRSF1/SFRS1 (ASF/SF2), SNRNP70 and U2AF1 but not U2AF2. Binds SREK1/SFRS12. Interacts with BRDT. Post-translationally, extensively phosphorylated on serine residues in the RS domain. Phosphorylated by SRPK2 and this causes its redistribution from the nuclear speckle to nucleoplasm and controls cell fate decision in response to cisplatin treatment. KAT5/TIP60 inhibits its phosphorylation by preventing SRPK2 nuclear translocation. Acetylation on Lys-52 by KAT5/TIP60 promotes its proteasomal degradation. This effect is counterbalanced by HDAC6, which positively controls SRSF2 protein level by deacetylating it and preventing its proteasomal degradation. In terms of tissue distribution, expressed in all the tissues examined; liver, kidney, spleen, heart, lung and brain.

The protein localises to the nucleus. It localises to the nucleoplasm. It is found in the nucleus speckle. Its function is as follows. Necessary for the splicing of pre-mRNA. It is required for formation of the earliest ATP-dependent splicing complex and interacts with spliceosomal components bound to both the 5'- and 3'-splice sites during spliceosome assembly. It also is required for ATP-dependent interactions of both U1 and U2 snRNPs with pre-mRNA. Can bind to the myelin basic protein (MBP) gene MB3 regulatory region and increase transcription of the mbp promoter in cells derived from the CNS. The phosphorylated form (by SRPK2) is required for cellular apoptosis in response to cisplatin treatment. This Mus musculus (Mouse) protein is Serine/arginine-rich splicing factor 2 (Srsf2).